Reading from the N-terminus, the 590-residue chain is Neuronal PAS domain-containing protein 1 (590 aa).

In terms of domain architecture, bHLH spans 45–98 (QRKEKSRNAARSRRGKENLEFFELAKLLPLPGAISSQLDKASIVRLSVTYLRLR). The 73-residue stretch at 135–207 (EQHLGGHILQ…LGLRTPTPGP (73 aa)) folds into the PAS 1 domain. Residues 198–229 (LGLRTPTPGPPTPPSVSSSSSSSSSLADTPEI) form a disordered region. The span at 212-222 (SVSSSSSSSSS) shows a compositional bias: low complexity. The PAS 2 domain occupies 293–359 (APLAELPLHG…IRQSHVDLLD (67 aa)). Residues 365–408 (TGYYRWLQRAGGFVWLQSVATVAGSGKSPGEHHVLWVSHVLSQA) form the PAC domain. The interval 425–494 (ACEEASSPGP…SHPATPRPEF (70 aa)) is disordered. Over residues 433–442 (GPEPTEPEPP) the composition is skewed to pro residues. A compositionally biased stretch (basic and acidic residues) spans 463-476 (IKVEPGPRETKGSE).

In terms of assembly, efficient DNA binding requires dimerization with another bHLH protein. Interacts with ARNT; forms a heterodimer that binds core DNA sequence 5'-[AG]CGTG-3' within the hypoxia response element (HRE) leading to a transcriptional repressor on its target gene TH.

The protein resides in the nucleus. Its function is as follows. May control regulatory pathways relevant to schizophrenia and to psychotic illness. May play a role in late central nervous system development by modulating EPO expression in response to cellular oxygen level. Forms a heterodimer that binds core DNA sequence 5'-TACGTG-3' within the hypoxia response element (HRE) leading to transcriptional repression on its target gene TH. This is Neuronal PAS domain-containing protein 1 (NPAS1) from Homo sapiens (Human).